Consider the following 557-residue polypeptide: Syntaxin-binding protein 4 (557 aa).

Phosphoserine occurs at positions 10 and 12. The 87-residue stretch at Ala-19 to Phe-105 folds into the PDZ domain. Position 99 is a phosphoserine; by PKB/AKT2 (Ser-99). Residues Pro-142–Pro-154 show a composition bias toward low complexity. Residues Pro-142–Asn-214 form a disordered region. The segment covering Ser-179–Ala-194 has biased composition (polar residues). At Ser-216 the chain carries Phosphoserine. A coiled-coil region spans residues Ala-298–Lys-408. A Phosphoserine modification is found at Ser-467. In terms of domain architecture, WW spans Asp-500 to Met-533.

As to quaternary structure, interacts with STX4A. In terms of processing, phosphorylated on Ser-99 by PKB/AKT2 after insulin treatment. Phosphorylation on Ser-99 abolishes the interaction with STX4A. In terms of tissue distribution, detected in skeletal muscle, heart, testis, adipocytes and pancreatic islet cells.

Its subcellular location is the cytoplasm. Plays a role in the translocation of transport vesicles from the cytoplasm to the plasma membrane. Inhibits the translocation of SLC2A4 from intracellular vesicles to the plasma membrane by STX4A binding and preventing the interaction between STX4A and VAMP2. Stimulation with insulin disrupts the interaction with STX4A, leading to increased levels of SLC2A4 at the plasma membrane. May also play a role in the regulation of insulin release by pancreatic beta cells after stimulation by glucose. This Mus musculus (Mouse) protein is Syntaxin-binding protein 4 (Stxbp4).